Here is a 143-residue protein sequence, read N- to C-terminus: Large ribosomal subunit protein uL16 (143 aa).

It belongs to the universal ribosomal protein uL16 family. Part of the 50S ribosomal subunit.

Its function is as follows. Binds 23S rRNA and is also seen to make contacts with the A and possibly P site tRNAs. This Caulobacter vibrioides (strain ATCC 19089 / CIP 103742 / CB 15) (Caulobacter crescentus) protein is Large ribosomal subunit protein uL16.